The following is a 480-amino-acid chain: Ochratoxinase (480 aa).

Zn(2+) contacts are provided by His111, His113, Lys246, His287, and His307. Residue Lys246 is part of the active site. Asp378 is an active-site residue.

This sequence belongs to the metallo-dependent hydrolases superfamily. Ochratoxinase amidase 2 family. Homooctamer. The cofactor is Zn(2+).

It is found in the secreted. It catalyses the reaction ochratoxin A + H2O = ochratoxin alpha + L-phenylalanine. Its activity is regulated as follows. The Zn(2+)-specific chelator 1,10-phenanthroline inhibits the enzyme activity. In terms of biological role, carboxypeptidase that catalyzes the release of a C-terminal amino acid with specific catalytic activity for aromatic amino acids such as phenylalanine. Is able to degrade ochratoxin A, one of the five major mycotoxins most harmful to humans and animals that is produced by Aspergillus and Penicillium species and occurs in a wide range of agricultural products. The sequence is that of Ochratoxinase from Aspergillus niger (strain ATCC MYA-4892 / CBS 513.88 / FGSC A1513).